The primary structure comprises 53 residues: uncharacterized protein (53 aa).

It belongs to the ycf15 family.

Its subcellular location is the plastid. It is found in the chloroplast. This is an uncharacterized protein from Helianthus annuus (Common sunflower).